The primary structure comprises 234 residues: Putative N-acetylmannosamine-6-phosphate 2-epimerase (234 aa).

Belongs to the NanE family.

The catalysed reaction is an N-acyl-D-glucosamine 6-phosphate = an N-acyl-D-mannosamine 6-phosphate. It participates in amino-sugar metabolism; N-acetylneuraminate degradation; D-fructose 6-phosphate from N-acetylneuraminate: step 3/5. In terms of biological role, converts N-acetylmannosamine-6-phosphate (ManNAc-6-P) to N-acetylglucosamine-6-phosphate (GlcNAc-6-P). This is Putative N-acetylmannosamine-6-phosphate 2-epimerase from Klebsiella pneumoniae (strain 342).